The sequence spans 489 residues: Betaine aldehyde dehydrogenase (489 aa).

K(+) is bound at residue N93. Position 150–152 (150–152 (GAW)) interacts with NAD(+). K162 (charge relay system) is an active-site residue. Residue 176-179 (KPSE) coordinates NAD(+). V180 provides a ligand contact to K(+). Residue 229–232 (EVGT) coordinates NAD(+). L245 serves as a coordination point for K(+). The active-site Proton acceptor is E251. Residues G253, C285, and E386 each coordinate NAD(+). The active-site Nucleophile is C285. C285 carries the cysteine sulfenic acid (-SOH) modification. Residues K456 and G459 each contribute to the K(+) site. E463 (charge relay system) is an active-site residue.

This sequence belongs to the aldehyde dehydrogenase family. In terms of assembly, dimer of dimers. K(+) is required as a cofactor.

The enzyme catalyses betaine aldehyde + NAD(+) + H2O = glycine betaine + NADH + 2 H(+). The protein operates within amine and polyamine biosynthesis; betaine biosynthesis via choline pathway; betaine from betaine aldehyde: step 1/1. Involved in the biosynthesis of the osmoprotectant glycine betaine. Catalyzes the irreversible oxidation of betaine aldehyde to the corresponding acid. This chain is Betaine aldehyde dehydrogenase, found in Chromohalobacter salexigens (strain ATCC BAA-138 / DSM 3043 / CIP 106854 / NCIMB 13768 / 1H11).